Reading from the N-terminus, the 125-residue chain is Small ribosomal subunit protein uS13 (125 aa).

The disordered stretch occupies residues 97–125; that stretch reads PVRGQKTRSNARTRKGPRPSRIKTKKKSS. Residues 101–125 are compositionally biased toward basic residues; it reads QKTRSNARTRKGPRPSRIKTKKKSS.

Belongs to the universal ribosomal protein uS13 family. In terms of assembly, part of the 30S ribosomal subunit. Forms a loose heterodimer with protein S19. Forms two bridges to the 50S subunit in the 70S ribosome.

Its function is as follows. Located at the top of the head of the 30S subunit, it contacts several helices of the 16S rRNA. In the 70S ribosome it contacts the 23S rRNA (bridge B1a) and protein L5 of the 50S subunit (bridge B1b), connecting the 2 subunits; these bridges are implicated in subunit movement. Contacts the tRNAs in the A and P-sites. This Thermotoga maritima (strain ATCC 43589 / DSM 3109 / JCM 10099 / NBRC 100826 / MSB8) protein is Small ribosomal subunit protein uS13.